Consider the following 295-residue polypeptide: MRHSVARPTRLPRRLSPFWDPATCKNLEGGAGEVVRGRDPRRLRTSRSTEILGEDLAGPSAGAAARPAAPPPQPREPGAPGLRRAPPRTRMDSSGLGPCSEAPLHTSAGLSGRNLRAAGGVLPVDLERERAALCARQSGHGPPAVRWLLGSRGAESGGLARRRVAAEHAQPSANLVCRSALETSAFPPSKPKSPRGRVRARSSDGRLRHPAWRAGSGGRGGRGPSAELASRYWGRRRALPGAADLRPKGARADDRRPLRAGRKLHLPEAARLPGNVGKSGEPHKAGEVGNHPRDS.

Residues 1-13 show a composition bias toward basic residues; the sequence is MRHSVARPTRLPR. 2 disordered regions span residues 1–111 and 183–295; these read MRHS…AGLS and TSAF…PRDS. Low complexity predominate over residues 57 to 67; sequence AGPSAGAAARP. Over residues 68 to 77 the composition is skewed to pro residues; it reads AAPPPQPREP. Composition is skewed to basic and acidic residues over residues 245–257 and 280–295; these read LRPKGARADDRRP and GEPHKAGEVGNHPRDS.

This is an uncharacterized protein from Homo sapiens (Human).